The chain runs to 350 residues: Proton-activated chloride channel (350 aa).

The tract at residues 1–51 (MEAIRKELSRSYQELNDETDPIARDPEGAQEEEQEEAASAVVPDRDSDRSN) is disordered. At 1-63 (MEAIRKELSR…VHFSRTCLKN (63 aa)) the chain is on the cytoplasmic side. The helical transmembrane segment at 64–84 (VFSVLLIFVYLLLMGVAVFLV) threads the bilayer. Over 85 to 297 (YQTITDFRDK…KDPYIQEIQD (213 aa)) the chain is Extracellular. A helical membrane pass occupies residues 298–318 (IITANPWSMIALLCSVFLVLF). The Cytoplasmic portion of the chain corresponds to 319 to 350 (KAADFAKLSVKWMIKVRRRHLKKRTRELNHIS).

The protein belongs to the proton-activated chloride channel family.

It localises to the cell membrane. It carries out the reaction chloride(in) = chloride(out). Functionally, chloride channel gated by pH that facilitates the entry of chloride ions into cells upon exposure to extracellular acidic pH. This chain is Proton-activated chloride channel, found in Xenopus laevis (African clawed frog).